Consider the following 199-residue polypeptide: Small ribosomal subunit protein uS4 (199 aa).

The S4 RNA-binding domain occupies 91 to 154 (SRLDNVVYRL…KDLIIVKEAL (64 aa)).

This sequence belongs to the universal ribosomal protein uS4 family. Part of the 30S ribosomal subunit. Contacts protein S5. The interaction surface between S4 and S5 is involved in control of translational fidelity.

Functionally, one of the primary rRNA binding proteins, it binds directly to 16S rRNA where it nucleates assembly of the body of the 30S subunit. Its function is as follows. With S5 and S12 plays an important role in translational accuracy. The polypeptide is Small ribosomal subunit protein uS4 (Phytoplasma mali (strain AT)).